A 114-amino-acid chain; its full sequence is Circadian clock oscillator protein KaiB (114 aa).

The protein belongs to the KaiB family. In terms of assembly, may undergo a major conformational rearrangment; in the free state forms homooligomers. When bound to KaiC switches to a monomeric thioredoxin-fold (KaiB(fs)). The active oscillator complex is probably KaiC(6):KaiB(6).

In terms of biological role, component of the KaiBC clock protein complex, which constitutes the main circadian regulator in cyanobacteria; it may modify the ATPase activity of KaiC. Functionally, may be a metamorphic protein which reversibly switches between an inactive tetrameric fold and a rare, thioredoxin-like monomeric fold (KaiB(fs)). KaiB(fs) binds phospho-KaiC, and perhaps clock output effectors. The protein is Circadian clock oscillator protein KaiB of Prochlorococcus marinus (strain MIT 9211).